Reading from the N-terminus, the 598-residue chain is Transcriptional repressor tup12 (598 aa).

The segment at 118–177 (IASGVVPQSSKTKHGRNSVSFGKYGNAGPFNSDNSSKPLILNNGSSGGTPKNLRSPAIDS) is disordered. 7 WD repeats span residues 285–325 (EPPI…AMVF), 332–371 (LITLLQEESSKREGDLYVRSVAFSPDGKYLATGVEDQQIR), 374–413 (DIAQKRVYRLLTGHEQEIYSLDFSKDGKTLVSGSGDRTVC), 415–454 (WDVEAGEQKLILHTDDGVTTVMFSPDGQFIAAGSLDKVIR), 456–495 (WTSSGTLVEQLHGHEESVYSVAFSPDGKYLVSGSLDNTIK), 510–549 (YKEGGICKQTFTGHKDFILSVTVSPDGKWIISGSKDRTIQ), and 552–585 (SPDSPHSQLTLQGHNNSVISVAVSPNGHCFATGS).

It belongs to the WD repeat TUP1 family.

Its function is as follows. Transcriptional repressor. In Schizosaccharomyces pombe (strain 972 / ATCC 24843) (Fission yeast), this protein is Transcriptional repressor tup12 (tup12).